Consider the following 1807-residue polypeptide: Triacetic acid lactone synthase cle1 (1807 aa).

A Starter acyltransferase (SAT) domain is found at 107–280; sequence LAPLTVIIHI…ANVPVNGRYH (174 aa). Residues 385-795 enclose the Ketosynthase family 3 (KS3) domain; it reads DTSIAIIGAA…GNNTAIIICQ (411 aa). Residues Cys540, His675, and His718 each act as for beta-ketoacyl synthase activity in the active site. Residues 919–1176 form the Malonyl-CoA:ACP transacylase (MAT) domain; that stretch reads SKAVYDSSYH…LGPCIWLEAG (258 aa). Residues 1272–1398 are N-terminal hotdog fold; sequence PVIDGLISLE…GTVIVDDERT (127 aa). Residues 1272 to 1573 form the PKS/mFAS DH domain; sequence PVIDGLISLE…FIRTSTSALQ (302 aa). His1304 acts as the Proton acceptor; for dehydratase activity in catalysis. Residues 1416–1573 are C-terminal hotdog fold; sequence TVFSAPRGVA…FIRTSTSALQ (158 aa). Residue Asp1475 is the Proton donor; for dehydratase activity of the active site. A Carrier 1 domain is found at 1605-1679; that stretch reads ANVWSLTVNL…IICERITAQT (75 aa). Residue Ser1639 is modified to O-(pantetheine 4'-phosphoryl)serine. Residues 1690 to 1720 are disordered; that stretch reads GNSTSNTTSSSSQCTPSSSFESDSDTQATEL. Residues 1692–1710 are compositionally biased toward low complexity; sequence STSNTTSSSSQCTPSSSFE. Residues 1721-1797 form the Carrier 2 domain; sequence SLSAPTMEKV…DLHALVMRRG (77 aa). Residue Ser1757 is modified to O-(pantetheine 4'-phosphoryl)serine.

Requires pantetheine 4'-phosphate as cofactor.

It functions in the pathway secondary metabolite biosynthesis; terpenoid biosynthesis. Its function is as follows. Non-reducing polyketide synthase; part of the cluster A that mediates the biosynthesis of chevalone E and its oxidized derivatives that possess a unique five-membered lactone ring and can synergistically enhance the cytotoxicity of doxorubicin (DOX) in breast cancer cells. Within the pathway, cle1 takes part to the biosynthesis of the molecular scaffold via the synthesis the alpha-pyrone triacetic acid lactone (TAL) from one molecule of acetyl-CoA and two molecules of malonyl-CoA. The molecular scaffold is commonly biosynthesized by a series of enzymes including the non-reducing polyketide synthase (NR-PKS) cle1 that produces the alpha-pyrone triacetic acid lactone (TAL); The membrane-bound prenyltransferase cle5 that accepts TAL as its substrate to perform a C-3 geranylgeranylation reaction, in which the pathway-dedicated GGPS cle6 is required to provide GGPP, the other substrate of cle5; the FAD-dependent monooxygenase Cle3 that forms an (S)-epoxide ring at the terminal olefin of the geranylgeranyl group; and the terpene cyclase Cle7 that catalyzes the cyclization of the prenyl group that yields the pentacyclic pathway intermediate chevalone E. Chevalone E can derivatize into seven new oxidized analogs by the cytochrome P450 monooxygenases cle2 (acting at C-20) and cle4 (acting at C-11 and C-12). The sequence is that of Triacetic acid lactone synthase cle1 from Aspergillus versicolor.